A 409-amino-acid chain; its full sequence is F-box/kelch-repeat protein At2g44130 (409 aa).

Positions 17 to 63 (HELIPGLPSELALECLVRVPFQFQSAMRSVCRSWRSLLSDSSFIQER) constitute an F-box domain. 4 Kelch repeats span residues 98-148 (KKSE…VLQD), 151-199 (KILL…SVSP), 201-248 (KVYV…AVGM), and 251-300 (RFCV…RTAG).

This chain is F-box/kelch-repeat protein At2g44130, found in Arabidopsis thaliana (Mouse-ear cress).